Reading from the N-terminus, the 156-residue chain is Transcription elongation factor GreA (156 aa).

Positions 8 to 75 (LTKEGYEKLK…ELENMLSKAE (68 aa)) form a coiled coil.

Belongs to the GreA/GreB family.

Necessary for efficient RNA polymerase transcription elongation past template-encoded arresting sites. The arresting sites in DNA have the property of trapping a certain fraction of elongating RNA polymerases that pass through, resulting in locked ternary complexes. Cleavage of the nascent transcript by cleavage factors such as GreA or GreB allows the resumption of elongation from the new 3'terminus. GreA releases sequences of 2 to 3 nucleotides. The protein is Transcription elongation factor GreA of Thermosipho melanesiensis (strain DSM 12029 / CIP 104789 / BI429).